The sequence spans 884 residues: E3 SUMO-protein ligase SIZ1 (884 aa).

The SAP domain maps to 11–45 (LSYFRIKELKDVLTQLGLSKQGKKQELVDRILTLL). Residues 84 to 103 (LASKGQVSSDTSNLKVKGEP) are disordered. Residues 88-97 (GQVSSDTSNL) are compositionally biased toward polar residues. Lysine 100 is covalently cross-linked (Glycyl lysine isopeptide (Lys-Gly) (interchain with G-Cter in SUMO)). Residues 112-168 (KVRCVCGNSLETDSMIQCEDPRCHVWQHVGCVILPDKPMDGNPPLPESFYCEICRLT) form a PHD-type zinc finger. The segment at 346 to 429 (SDSDIEVVAD…FNRITSKMKH (84 aa)) adopts an SP-RING-type zinc-finger fold. Zn(2+)-binding residues include cysteine 379, histidine 381, cysteine 402, and cysteine 405. A Glycyl lysine isopeptide (Lys-Gly) (interchain with G-Cter in SUMO) cross-link involves residue lysine 488. Disordered regions lie at residues 753–778 (PSLQ…ADMS), 792–824 (GDSA…MDTT), and 836–869 (DSRQ…QTRH). 2 stretches are compositionally biased toward polar residues: residues 766-778 (SAQS…ADMS) and 803-824 (ATTN…MDTT). A compositionally biased stretch (basic and acidic residues) spans 837-847 (SRQDKAKKQRS).

The protein belongs to the PIAS family. Interacts (via PHD domain) with SCE1, GTE3 and GTE5. Post-translationally, autosumoylated at Lys-100 and Lys-488. Ubiquitous.

It is found in the nucleus speckle. Its pathway is protein modification; protein sumoylation. Functionally, E3 SUMO protein ligase involved in regulation processes. Mediates SUMO/ attachment to PHR1, a MYB transcriptional activator controlling the phosphate deficiency responses. Functions as an upstream negative regulator of salicylic acid (SA) accumulation and subsequent SA-mediated systemic acquired resistance (SAR) signaling. Probably not involved in jasmonic acid (JA)-mediated defense response. Participates in abiotic stress-induced sumoylation. Controls heat shock-induced SUMO1 and SUMO2 conjugation and facilitates basal thermotolerance. Involved in freezing tolerance by mediating sumoylation of ICE1, a transcription activator of the cold signaling regulator CBF3/DREB1A. Acts as a positive regulator of drought stress tolerance. Acts as a floral repressor that promotes FLC expression by repressing FLD activity through sumoylation. Acts as a negative regulator of abscisic acid (ABA) signaling through ABI5 sumoylation. Mediates sumoylation of SCE1, GTE3 and GTE5. Functions as a negative regulator of SnRK1 signaling through sumoylation of several components of the SnRK1 complex. This chain is E3 SUMO-protein ligase SIZ1, found in Arabidopsis thaliana (Mouse-ear cress).